We begin with the raw amino-acid sequence, 219 residues long: MEKKYPRILFRKRLKDLRKDMEEVSQKTLKTHKLAVDLLMEYDEEKKEKVIKNSRAIDDMVFNLERKAISLIAAEQPVAGDLRFIEACIKVGSHLKRIGYLAANIAEAAEKLKDEEIPRRPLEDLKHMSDFVQMMLSKGIYAFLDQNMEMARELRHDDDKVDDLFDQTLEHVTRSMFEDKESISYLVNLLFIARFLERVGDRAVSIADRTIFMITCEKP.

This sequence belongs to the PhoU family. In terms of assembly, homodimer.

Its subcellular location is the cytoplasm. Functionally, plays a role in the regulation of phosphate uptake. This is Phosphate-specific transport system accessory protein PhoU homolog 1 from Methanothermobacter thermautotrophicus (strain ATCC 29096 / DSM 1053 / JCM 10044 / NBRC 100330 / Delta H) (Methanobacterium thermoautotrophicum).